We begin with the raw amino-acid sequence, 205 residues long: Phosphoheptose isomerase (205 aa).

An SIS domain is found at 38–200 (LAVRLALGSK…LFEAVGELEP (163 aa)). 53-55 (NGG) is a substrate binding site. Zn(2+) contacts are provided by histidine 62 and glutamate 66. Residues glutamate 66, 95 to 96 (ND), 121 to 123 (STS), serine 126, and glutamine 173 each bind substrate. Zn(2+) is bound by residues glutamine 173 and histidine 181.

The protein belongs to the SIS family. GmhA subfamily. Homotetramer. It depends on Zn(2+) as a cofactor.

It is found in the cytoplasm. It carries out the reaction 2 D-sedoheptulose 7-phosphate = D-glycero-alpha-D-manno-heptose 7-phosphate + D-glycero-beta-D-manno-heptose 7-phosphate. It functions in the pathway carbohydrate biosynthesis; D-glycero-D-manno-heptose 7-phosphate biosynthesis; D-glycero-alpha-D-manno-heptose 7-phosphate and D-glycero-beta-D-manno-heptose 7-phosphate from sedoheptulose 7-phosphate: step 1/1. Its function is as follows. Catalyzes the isomerization of sedoheptulose 7-phosphate in D-glycero-D-manno-heptose 7-phosphate. The chain is Phosphoheptose isomerase from Maridesulfovibrio salexigens (strain ATCC 14822 / DSM 2638 / NCIMB 8403 / VKM B-1763) (Desulfovibrio salexigens).